A 138-amino-acid polypeptide reads, in one-letter code: CLAVATA3/ESR (CLE)-related protein 2 (138 aa).

An N-terminal signal peptide occupies residues Met1–Ala22. The tract at residues Ser23–Met90 is required for secretion from the host cytoplasm to the host apoplasm. N-linked (GlcNAc...) asparagine glycans are attached at residues Asn37, Asn87, and Asn123. Disordered stretches follow at residues Ala66–Val97 and Leu116–His138. Residues Arg127–His138 carry the CLE motif.

This sequence belongs to the CLV3/ESR signal peptide family. Highly expressed exclusively within the dorsal esophageal gland cell during syncytium formation in host plants (at protein level).

It localises to the secreted. It is found in the host cytoplasm. The protein resides in the host extracellular space. The protein localises to the extracellular space. Its subcellular location is the apoplast. In terms of biological role, mimics host plant CLE extracellular signal peptides that regulate cell fate. May play a role in the differentiation or division of feeding cells (syncytia) induced in plant roots during infection. The sequence is that of CLAVATA3/ESR (CLE)-related protein 2 (CLE2) from Heterodera glycines (Soybean cyst nematode worm).